Reading from the N-terminus, the 544-residue chain is Chaperonin GroEL (544 aa).

ATP-binding positions include 30–33, Lys51, 87–91, Gly415, and Asp495; these read TLGP and DGTTT.

The protein belongs to the chaperonin (HSP60) family. In terms of assembly, forms a cylinder of 14 subunits composed of two heptameric rings stacked back-to-back. Interacts with the co-chaperonin GroES.

It is found in the cytoplasm. It catalyses the reaction ATP + H2O + a folded polypeptide = ADP + phosphate + an unfolded polypeptide.. Its function is as follows. Together with its co-chaperonin GroES, plays an essential role in assisting protein folding. The GroEL-GroES system forms a nano-cage that allows encapsulation of the non-native substrate proteins and provides a physical environment optimized to promote and accelerate protein folding. The protein is Chaperonin GroEL of Neisseria gonorrhoeae (strain ATCC 700825 / FA 1090).